The chain runs to 390 residues: Putative glutamate--cysteine ligase 2 (390 aa).

The protein belongs to the glutamate--cysteine ligase type 2 family. YbdK subfamily.

The catalysed reaction is L-cysteine + L-glutamate + ATP = gamma-L-glutamyl-L-cysteine + ADP + phosphate + H(+). ATP-dependent carboxylate-amine ligase which exhibits weak glutamate--cysteine ligase activity. The protein is Putative glutamate--cysteine ligase 2 of Chloroflexus aurantiacus (strain ATCC 29366 / DSM 635 / J-10-fl).